The following is a 131-amino-acid chain: Glycine cleavage system H protein (131 aa).

The Lipoyl-binding domain maps to 24-106 (RAIVGISDHA…YGEGWIMVIE (83 aa)). Lys-65 is modified (N6-lipoyllysine).

Belongs to the GcvH family. As to quaternary structure, the glycine cleavage system is composed of four proteins: P, T, L and H. (R)-lipoate serves as cofactor.

In terms of biological role, the glycine cleavage system catalyzes the degradation of glycine. The H protein shuttles the methylamine group of glycine from the P protein to the T protein. The chain is Glycine cleavage system H protein from Xylella fastidiosa (strain 9a5c).